Reading from the N-terminus, the 382-residue chain is SPRY domain-containing protein C285.10c (382 aa).

A helical transmembrane segment spans residues 21–41 (LAILFIFIALAAVIVLLICLL). The B30.2/SPRY domain occupies 79–284 (GFSLLDDMGK…LHVNLGQAGY (206 aa)). The interval 304-382 (APPPSYSTSQ…MHSMPATDEV (79 aa)) is disordered. Composition is skewed to polar residues over residues 309–334 (YSTS…QGDT) and 361–372 (FSPSSSNNQAYQ).

It is found in the cytoplasm. The protein resides in the membrane. This is SPRY domain-containing protein C285.10c from Schizosaccharomyces pombe (strain 972 / ATCC 24843) (Fission yeast).